The primary structure comprises 457 residues: MSGFSSGNVNSRVVDILSGVVPLLKLICLTVIGLLLAHPKTQLVPRATFRLLSKLVFALFLPCLIFTELGESITLDNIVQWWFIPVNVLLSAVVGSLIGYLVVLICRPPPEFNRFTIVMTAFGNTGNLLLAIVSSVCHTKTNPFGPNCNSRGVSYVSFAQWVAVILVYTVVYHMMEPPLEYYEVVEEEGVEIEEINVENHDASRPLLVEAEWPGIEDKETEHCKTPFIARVFNSISSFSQTSFPEVDLGGEYGGESSSPRSIQCLAEPRVMRRIRVVAEQTPVKHILQPPTIASLLAIIIGSVPQLKSVVFGYDAPLSFITDSLNIMGSAMVPSVMLVLGGMLSEGPNESTLGLRTTIGISVARLLVLPLVGIGIVMSADKLGLISSADPMFKFVLLLQYSTPSAILLGAIASLRGYAVREASALLFWQHIFALLSLTFYIVIFFKLTVETTVQGMQ.

Over Met-1–Asp-15 the chain is Lumenal. The helical transmembrane segment at Ile-16–Leu-36 threads the bilayer. Residues Ala-37–Lys-54 are Cytoplasmic-facing. A helical membrane pass occupies residues Leu-55–Leu-75. At Asp-76–Pro-85 the chain is on the lumenal side. Residues Val-86–Cys-106 traverse the membrane as a helical segment. The Cytoplasmic segment spans residues Arg-107 to Thr-116. Residues Ile-117 to Cys-137 traverse the membrane as a helical segment. At His-138–Arg-151 the chain is on the lumenal side. Residues Gly-152–Tyr-172 form a helical membrane-spanning segment. The Cytoplasmic segment spans residues His-173–Thr-291. The helical transmembrane segment at Ile-292–Gly-312 threads the bilayer. Residues Tyr-313 to Asp-322 are Lumenal-facing. Residues Ser-323–Leu-343 traverse the membrane as a helical segment. At Ser-344–Thr-356 the chain is on the cytoplasmic side. Residues Thr-357 to Met-377 traverse the membrane as a helical segment. At Ser-378 to Lys-393 the chain is on the lumenal side. Residues Phe-394–Leu-414 traverse the membrane as a helical segment. Topologically, residues Arg-415–Ala-424 are cytoplasmic. A helical transmembrane segment spans residues Leu-425–Phe-445. Topologically, residues Lys-446–Gln-457 are lumenal.

Belongs to the auxin efflux carrier (TC 2.A.69.2) family. As to expression, expressed in seedlings, rosette and cauline leaves, flowers and siliques.

Its subcellular location is the endoplasmic reticulum membrane. Involved in cellular auxin homeostasis by regulating auxin metabolism. Regulates intracellular auxin accumulation at the endoplasmic reticulum and thus auxin availability for nuclear auxin signaling. The polypeptide is Protein PIN-LIKES 2 (Arabidopsis thaliana (Mouse-ear cress)).